The sequence spans 246 residues: NAD(P)H-quinone oxidoreductase subunit K (246 aa).

Residues Cys62, Cys63, Cys127, and Cys158 each contribute to the [4Fe-4S] cluster site.

The protein belongs to the complex I 20 kDa subunit family. As to quaternary structure, NDH-1 can be composed of about 15 different subunits; different subcomplexes with different compositions have been identified which probably have different functions. [4Fe-4S] cluster serves as cofactor.

It localises to the cellular thylakoid membrane. The enzyme catalyses a plastoquinone + NADH + (n+1) H(+)(in) = a plastoquinol + NAD(+) + n H(+)(out). The catalysed reaction is a plastoquinone + NADPH + (n+1) H(+)(in) = a plastoquinol + NADP(+) + n H(+)(out). In terms of biological role, NDH-1 shuttles electrons from an unknown electron donor, via FMN and iron-sulfur (Fe-S) centers, to quinones in the respiratory and/or the photosynthetic chain. The immediate electron acceptor for the enzyme in this species is believed to be plastoquinone. Couples the redox reaction to proton translocation, and thus conserves the redox energy in a proton gradient. Cyanobacterial NDH-1 also plays a role in inorganic carbon-concentration. The chain is NAD(P)H-quinone oxidoreductase subunit K from Parasynechococcus marenigrum (strain WH8102).